A 267-amino-acid polypeptide reads, in one-letter code: tRNA (guanine-N(1)-)-methyltransferase (267 aa).

Residues glycine 112 and 131–136 each bind S-adenosyl-L-methionine; that span reads IGDYIL. The segment covering 245–259 has biased composition (basic and acidic residues); the sequence is DRRKEKNSYEDEFNR. The segment at 245-267 is disordered; that stretch reads DRRKEKNSYEDEFNRRNYKRSTS.

The protein belongs to the RNA methyltransferase TrmD family. As to quaternary structure, homodimer.

Its subcellular location is the cytoplasm. It carries out the reaction guanosine(37) in tRNA + S-adenosyl-L-methionine = N(1)-methylguanosine(37) in tRNA + S-adenosyl-L-homocysteine + H(+). Specifically methylates guanosine-37 in various tRNAs. The chain is tRNA (guanine-N(1)-)-methyltransferase from Spiroplasma kunkelii.